The sequence spans 2206 residues: Genome polyprotein (2206 aa).

Gly2 is lipidated: N-myristoyl glycine; by host. At 2–1517 (GAQVSSQKVG…NINRAMTILQ (1516 aa)) the chain is on the cytoplasmic side. Amphipathic alpha-helix regions lie at residues 579–599 (GVDD…LPKP) and 579–603 (GVDD…QSNL). Active-site for protease 2A activity residues include His898 and Asp916. Zn(2+) contacts are provided by Cys933 and Cys935. Residue Cys987 is the For protease 2A activity of the active site. 2 residues coordinate Zn(2+): Cys993 and His995. The tract at residues 1125 to 1197 (GDSWLKKFTE…HQSCPSQEHQ (73 aa)) is membrane-binding. The segment at 1125 to 1263 (GDSWLKKFTE…SPGTGKSVAT (139 aa)) is oligomerization. The tract at residues 1146-1150 (SNKIS) is RNA-binding. The SF3 helicase domain maps to 1229-1385 (EHTINNYIQF…SEYSRDGKLN (157 aa)). Residue 1253–1260 (GSPGTGKS) coordinates ATP. Residues Cys1393, Cys1396, Cys1405, and Cys1410 each contribute to the Zn(2+) site. The C4-type zinc-finger motif lies at 1393-1410 (CKNCHQPANFKRCCPLVC). The tract at residues 1437 to 1444 (EKNRRSNI) is RNA-binding. Residues 1448–1453 (MEALFQ) form an oligomerization region. Residues 1518-1533 (AVTTFAAVAGVVYVMY) lie within the membrane without spanning it. Residues 1534–2206 (KLFAGHQGAY…TLYRRWLDSF (673 aa)) lie on the Cytoplasmic side of the membrane. The residue at position 1543 (Tyr1543) is an O-(5'-phospho-RNA)-tyrosine. Positions 1563-1741 (GPGFDYAVAM…FAAALKRSYF (179 aa)) constitute a Peptidase C3 domain. Active-site for protease 3C activity residues include His1602, Glu1633, and Cys1709. Positions 1972-2087 (EKLFAFDYTG…SYPHEVDASL (116 aa)) constitute a RdRp catalytic domain. Positions 1978 and 2073 each coordinate Mg(2+).

This sequence belongs to the picornaviruses polyprotein family. In terms of assembly, interacts with capsid protein VP1 and capsid protein VP3 to form heterotrimeric protomers. As to quaternary structure, interacts with capsid protein VP0, and capsid protein VP3 to form heterotrimeric protomers. Interacts with human PVR. Five protomers subsequently associate to form pentamers which serve as building blocks for the capsid. Interacts with capsid protein VP2, capsid protein VP3 and capsid protein VP4 following cleavage of capsid protein VP0. Interacts with capsid protein VP1 and capsid protein VP3 in the mature capsid. In terms of assembly, interacts with capsid protein VP0 and capsid protein VP1 to form heterotrimeric protomers. Five protomers subsequently associate to form pentamers which serve as building blocks for the capsid. Interacts with capsid protein VP4 in the mature capsid. Interacts with protein 2C; this interaction may be important for virion morphogenesis. As to quaternary structure, interacts with capsid protein VP1 and capsid protein VP3. Homodimer. In terms of assembly, homohexamer; forms a hexameric ring structure with 6-fold symmetry characteristic of AAA+ ATPases. Interacts (via N-terminus) with host RTN3 (via reticulon domain); this interaction is important for viral replication. Interacts with capsid protein VP3; this interaction may be important for virion morphogenesis. As to quaternary structure, interacts with protein 3CD. Homodimer. Interacts with host GBF1. Interacts (via GOLD domain) with host ACBD3 (via GOLD domain); this interaction allows the formation of a viral protein 3A/ACBD3 heterotetramer with a 2:2 stoichiometry, which will stimulate the recruitment of host PI4KB in order to synthesize PI4P at the viral RNA replication sites. In terms of assembly, interacts with RNA-directed RNA polymerase. As to quaternary structure, interacts with protein 3AB and with RNA-directed RNA polymerase. Interacts with Viral protein genome-linked and with protein 3CD. Mg(2+) serves as cofactor. Post-translationally, specific enzymatic cleavages in vivo by the viral proteases yield processing intermediates and the mature proteins. In terms of processing, myristoylation is required for the formation of pentamers during virus assembly. Further assembly of 12 pentamers and a molecule of genomic RNA generates the provirion. During virion maturation, immature virions are rendered infectious following cleavage of VP0 into VP4 and VP2. This maturation seems to be an autocatalytic event triggered by the presence of RNA in the capsid and it is followed by a conformational change infectious virion. Post-translationally, myristoylation is required during RNA encapsidation and formation of the mature virus particle. In terms of processing, VPg is uridylylated by the polymerase into VPg-pUpU. This acts as a nucleotide-peptide primer for the genomic RNA replication.

The protein localises to the virion. It is found in the host cytoplasm. The protein resides in the host cytoplasmic vesicle membrane. It localises to the host nucleus. The enzyme catalyses a ribonucleoside 5'-triphosphate + H2O = a ribonucleoside 5'-diphosphate + phosphate + H(+). It carries out the reaction Selective cleavage of Tyr-|-Gly bond in the picornavirus polyprotein.. It catalyses the reaction RNA(n) + a ribonucleoside 5'-triphosphate = RNA(n+1) + diphosphate. The catalysed reaction is Selective cleavage of Gln-|-Gly bond in the poliovirus polyprotein. In other picornavirus reactions Glu may be substituted for Gln, and Ser or Thr for Gly.. Its activity is regulated as follows. Replication or transcription is subject to high level of random mutations by the nucleotide analog ribavirin. Forms an icosahedral capsid of pseudo T=3 symmetry with capsid proteins VP2 and VP3. The capsid is 300 Angstroms in diameter, composed of 60 copies of each capsid protein and enclosing the viral positive strand RNA genome. Capsid protein VP1 mainly forms the vertices of the capsid. Capsid protein VP1 interacts with host cell receptor PVR to provide virion attachment to target host cells. This attachment induces virion internalization predominantly through clathrin- and caveolin-independent endocytosis in Hela cells and through caveolin-mediated endocytosis in brain microvascular endothelial cells. Tyrosine kinases are probably involved in the entry process. Virus binding to PVR induces increased junctional permeability and rearrangement of junctional proteins. Modulation of endothelial tight junctions, as well as cytolytic infection of endothelial cells themselves, may result in loss of endothelial integrity which may help the virus to reach the CNS. After binding to its receptor, the capsid undergoes conformational changes. Capsid protein VP1 N-terminus (that contains an amphipathic alpha-helix) and capsid protein VP4 are externalized. Together, they shape a pore in the host membrane through which viral genome is translocated to host cell cytoplasm. In terms of biological role, forms an icosahedral capsid of pseudo T=3 symmetry with capsid proteins VP2 and VP3. The capsid is 300 Angstroms in diameter, composed of 60 copies of each capsid protein and enclosing the viral positive strand RNA genome. Functionally, lies on the inner surface of the capsid shell. After binding to the host receptor, the capsid undergoes conformational changes. Capsid protein VP4 is released, Capsid protein VP1 N-terminus is externalized, and together, they shape a pore in the host membrane through which the viral genome is translocated into the host cell cytoplasm. Its function is as follows. Component of immature procapsids, which is cleaved into capsid proteins VP4 and VP2 after maturation. Allows the capsid to remain inactive before the maturation step. Cysteine protease that cleaves viral polyprotein and specific host proteins. It is responsible for the autocatalytic cleavage between the P1 and P2 regions, which is the first cleavage occurring in the polyprotein. Also cleaves the host translation initiation factor EIF4G1, in order to shut down the capped cellular mRNA translation. Inhibits the host nucleus-cytoplasm protein and RNA trafficking by cleaving host members of the nuclear pores including NUP98, NUP62 and NUP153. Counteracts stress granule formation probably by antagonizing its assembly or promoting its dissassembly. Cleaves and inhibits host IFIH1/MDA5, thereby inhibiting the type-I IFN production and the establishment of the antiviral state. Cleaves and inhibits host MAVS, thereby inhibiting the type-I IFN production and the establishment of the antiviral state. In terms of biological role, plays an essential role in the virus replication cycle by acting as a viroporin. Creates a pore in the host endoplasmic reticulum and as a consequence releases Ca2+ in the cytoplasm of infected cell. In turn, high levels of cytoplasmic calcium may trigger membrane trafficking and transport of viral ER-associated proteins to viroplasms, sites of viral genome replication. Functionally, induces and associates with structural rearrangements of intracellular membranes. Displays RNA-binding, nucleotide binding and NTPase activities. May play a role in virion morphogenesis and viral RNA encapsidation by interacting with the capsid protein VP3. Its function is as follows. Localizes the viral replication complex to the surface of membranous vesicles. Together with protein 3CD binds the Cis-Active RNA Element (CRE) which is involved in RNA synthesis initiation. Acts as a cofactor to stimulate the activity of 3D polymerase, maybe through a nucleid acid chaperone activity. Localizes the viral replication complex to the surface of membranous vesicles. It inhibits host cell endoplasmic reticulum-to-Golgi apparatus transport and causes the disassembly of the Golgi complex, possibly through GBF1 interaction. This would result in depletion of MHC, trail receptors and IFN receptors at the host cell surface. Plays an essential role in viral RNA replication by recruiting ACBD3 and PI4KB at the viral replication sites, thereby allowing the formation of the rearranged membranous structures where viral replication takes place. In terms of biological role, acts as a primer for viral RNA replication and remains covalently bound to viral genomic RNA. VPg is uridylylated prior to priming replication into VPg-pUpU. The oriI viral genomic sequence may act as a template for this. The VPg-pUpU is then used as primer on the genomic RNA poly(A) by the RNA-dependent RNA polymerase to replicate the viral genome. During genome replication, the VPg-RNA linkage is removed by the host TDP2, thereby accelerating replication. During the late stage of the replication cycle, host TDP2 is excluded from sites of viral RNA synthesis and encapsidation, allowing for the generation of progeny virions. Functionally, involved in the viral replication complex and viral polypeptide maturation. It exhibits protease activity with a specificity and catalytic efficiency that is different from protease 3C. Protein 3CD lacks polymerase activity. Protein 3CD binds to the 5'UTR of the viral genome. Its function is as follows. Major viral protease that mediates proteolytic processing of the polyprotein. Cleaves host EIF5B, contributing to host translation shutoff. Also cleaves host PABPC1, contributing to host translation shutoff. Cleaves host RIGI and thus contributes to the inhibition of type I interferon production. Cleaves host NLRP1, triggers host N-glycine-mediated degradation of the autoinhibitory NLRP1 N-terminal fragment. Inhibits the integrated stress response (ISR) in the infected cell by cleaving host G3BP1. Stress granule formation is thus inhibited, which allows protein synthesis and viral replication. Replicates the viral genomic RNA on the surface of intracellular membranes. May form linear arrays of subunits that propagate along a strong head-to-tail interaction called interface-I. Covalently attaches UMP to a tyrosine of VPg, which is used to prime RNA synthesis. The positive stranded RNA genome is first replicated at virus induced membranous vesicles, creating a dsRNA genomic replication form. This dsRNA is then used as template to synthesize positive stranded RNA genomes. ss(+)RNA genomes are either translated, replicated or encapsidated. In Poliovirus type 3 (strain 23127), this protein is Genome polyprotein.